We begin with the raw amino-acid sequence, 297 residues long: Coiled-coil domain-containing protein 159 (297 aa).

Residues 147–297 (EELELVREEV…SKSGRSFPPA (151 aa)) are a coiled coil. Positions 256–297 (LRGHKGHQCLSPPLPSWDSDSDCDQDLSQPPFSKSGRSFPPA) are disordered.

In terms of assembly, interacts with DYNLT2. Interacts with GGNBP1. Interacts with OSBP2.

Functions during spermatid development; may participate in the centrosome reduction procedure of spermatids and is required for the formation of the connecting piece/sperm head-tail coupling apparatus (HTCA) and the correct and tight attachment of the flagellum to the nuclear envelope. This Homo sapiens (Human) protein is Coiled-coil domain-containing protein 159 (CCDC159).